The chain runs to 499 residues: Terminase, large subunit (499 aa).

Positions 1-58 are interaction with the terminase small subunit; sequence MELDAILDNLSDEEQIELLELLEEEENYRNTHLLYEFAPYSKQREFIDAGHDYPERCF. The tract at residues 1–286 is ATPase activity; sequence MELDAILDNL…EHEREARARG (286 aa). The short motif at 60 to 67 is the Walker A motif element; that stretch reads AGNQLGKS. Positions 199 to 204 match the Walker B motif motif; that stretch reads GVWFDE. Residue E204 is the For ATPase activity of the active site. The nuclease activity stretch occupies residues 312–482; that stretch reads DHFYVIDAQD…FARMMRDIRK (171 aa). The Mg(2+) site is built by D321 and D459.

It belongs to the Lederbergvirus large terminase family. As to quaternary structure, interacts with the terminase small subunit; the active complex is composed of dimer of terminase large subunits and a nonamer ring of terminase small subunits. Interacts with the portal protein; this interaction allows the packaging of viral DNA. The cofactor is Mg(2+).

In terms of biological role, the terminase large subunit acts as an ATP driven molecular motor necessary for viral DNA translocation into empty capsids and as an endonuclease that cuts the viral genome to initiate and to end a packaging reaction. The terminase lies at a unique vertex of the procapsid and is composed of two subunits, a small terminase subunit involved in viral DNA recognition (packaging 'pac' sequence), and a large terminase subunit possessing endonucleolytic and ATPase activities. Both terminase subunits heterooligomerize and are docked on the portal protein to form the packaging machine. Once the capsid is packaged with the DNA (headful packaging), the terminase cleaves the viral genome concatemer and is substituted by the tail. This is Terminase, large subunit (2) from Salmonella phage P22 (Bacteriophage P22).